We begin with the raw amino-acid sequence, 123 residues long: Small ribosomal subunit protein uS12 (123 aa).

The residue at position 89 (D89) is a 3-methylthioaspartic acid. The disordered stretch occupies residues 101-123; that stretch reads TLDTSGVSDRRQSRSKYGAKRPK. The segment covering 113–123 has biased composition (basic residues); that stretch reads SRSKYGAKRPK.

It belongs to the universal ribosomal protein uS12 family. As to quaternary structure, part of the 30S ribosomal subunit. Contacts proteins S8 and S17. May interact with IF1 in the 30S initiation complex.

Functionally, with S4 and S5 plays an important role in translational accuracy. In terms of biological role, interacts with and stabilizes bases of the 16S rRNA that are involved in tRNA selection in the A site and with the mRNA backbone. Located at the interface of the 30S and 50S subunits, it traverses the body of the 30S subunit contacting proteins on the other side and probably holding the rRNA structure together. The combined cluster of proteins S8, S12 and S17 appears to hold together the shoulder and platform of the 30S subunit. The chain is Small ribosomal subunit protein uS12 from Solidesulfovibrio magneticus (strain ATCC 700980 / DSM 13731 / RS-1) (Desulfovibrio magneticus).